Here is a 657-residue protein sequence, read N- to C-terminus: Probable potassium transport system protein Kup (657 aa).

A disordered region spans residues 1–25 (MGSGPADEEHTVDTEPGVSPPRRTV). The next 12 membrane-spanning stretches (helical) occupy residues 35-55 (VVVG…IYTI), 77-97 (VVSL…VLLV), 127-147 (TAVL…DSMI), 165-185 (PGLE…LFSV), 196-216 (LFGP…VSGI), 234-254 (FFFG…LAVT), 275-295 (WLVL…ALLL), 315-335 (WPMV…VITG), 365-385 (IYVP…VFAF), 394-414 (AFGM…FYIV), 422-442 (LWLV…FLAA), and 447-467 (LVHG…VMTT).

Belongs to the HAK/KUP transporter (TC 2.A.72) family.

The protein localises to the cell membrane. It carries out the reaction K(+)(in) + H(+)(in) = K(+)(out) + H(+)(out). Transport of potassium into the cell. Likely operates as a K(+):H(+) symporter. The polypeptide is Probable potassium transport system protein Kup (Rhodococcus jostii (strain RHA1)).